We begin with the raw amino-acid sequence, 163 residues long: MFFSEARARSRTWEASPSEHRKWVEVFKACDEDHKGYLSREDFKTAVVMLFGYKPSKIEVDSVMSSINPNTSGILLEGFLNIVRKKKEAQRYRNEVRHIFTAFDTYYRGFLTLEDFKKAFRQVAPKLPERTVLEVFREVDRDSDGHVSFRDFEYALNYGQKEA.

EF-hand domains are found at residues S18 to Y53, R91 to K126, and L127 to E162. Residues D140, D142, D144, H146, and D151 each coordinate Ca(2+).

In Homo sapiens (Human), this protein is EF-hand calcium-binding domain-containing protein 11 (EFCAB11).